The following is a 558-amino-acid chain: Nucleoprotein (558 aa).

A binding site for the cap structure m7GTP region spans residues 54–237; it reads MRKERRDDKD…ITEQQSSINI (184 aa). Mn(2+)-binding residues include Asp382 and Glu384. Zn(2+) contacts are provided by Glu392, Cys499, His502, and Cys518. Asp522 is a binding site for Mn(2+).

The protein belongs to the arenaviridae nucleocapsid protein family. In terms of assembly, homomultimerizes to form the nucleocapsid. Binds to viral genomic RNA. Interacts with glycoprotein G2. Interacts with protein Z; this interaction probably directs the encapsidated genome to budding sites. Interacts with protein L; this interaction does not interfere with Z-L interaction. Interacts with host IKBKE (via Protein kinase domain); the interaction inhibits IKBKE kinase activity.

It localises to the virion. It is found in the host cytoplasm. Its function is as follows. Encapsidates the genome, protecting it from nucleases. The encapsidated genomic RNA is termed the nucleocapsid (NC). Serves as template for viral transcription and replication. The increased presence of protein N in host cell does not seem to trigger the switch from transcription to replication as observed in other negative strain RNA viruses. Through the interaction with host IKBKE, strongly inhibits the phosphorylation and nuclear translocation of host IRF3, a protein involved in interferon activation pathway, leading to the inhibition of interferon-beta and IRF3-dependent promoters activation. Also encodes a functional 3'-5' exoribonuclease that degrades preferentially dsRNA substrates and thereby participates in the suppression of interferon induction. This chain is Nucleoprotein, found in Lymphocytic choriomeningitis virus (strain WE) (LCMV).